We begin with the raw amino-acid sequence, 465 residues long: uncharacterized protein (465 aa).

Transmembrane regions (helical) follow at residues 19-39 (VLGP…GEYM), 50-70 (MIAG…VAMI), 91-111 (IVGP…YTML), 140-160 (FIVL…LATL), 164-184 (LVIT…VQFG), 201-221 (PYGW…YLGI), 244-264 (AGIM…SGLM), 288-308 (LMVL…NGCI), 342-362 (IVFL…DQVV), 363-383 (TFSI…MVMF), and 403-423 (LPTV…FLGY).

It belongs to the amino acid-polyamine-organocation (APC) superfamily.

It localises to the cell membrane. Its function is as follows. Probable amino-acid or metabolite transport protein. This is an uncharacterized protein from Rhizobium meliloti (strain 1021) (Ensifer meliloti).